The sequence spans 1013 residues: Sodium/potassium-transporting ATPase subunit alpha-3 (1013 aa).

The tract at residues 1–24 is disordered; that stretch reads MGDKKDDKDSPKKNKGKERRDLDD. Topologically, residues 1-77 are cytoplasmic; it reads MGDKKDDKDS…NALTPPPTTP (77 aa). A phosphoserine mark is found at Ser-37 and Ser-56. The interaction with phosphoinositide-3 kinase stretch occupies residues 72–74; it reads PPP. A helical membrane pass occupies residues 78–98; it reads EWVKFCRQLFGGFSILLWIGA. Topologically, residues 99–121 are extracellular; the sequence is ILCFLAYGIQAGTEDDPSGDNLY. A helical transmembrane segment spans residues 122-142; that stretch reads LGIVLAAVVIITGCFSYYQEA. Over 143 to 278 the chain is Cytoplasmic; that stretch reads KSSKIMESFK…VGKTPIAIEI (136 aa). Phosphoserine is present on residues Ser-218 and Ser-265. Residues 279-298 form a helical membrane-spanning segment; it reads EHFIQLITGVAVFLGVSFFI. Residues 299–310 are Extracellular-facing; the sequence is LSLILGYTWLEA. A helical membrane pass occupies residues 311-328; the sequence is VIFLIGIIVANVPEGLLA. The Cytoplasmic segment spans residues 329–762; that stretch reads TVTVCLTLTA…EEGRLIFDNL (434 aa). Catalysis depends on Asp-366, which acts as the 4-aspartylphosphate intermediate. Ser-442 is subject to Phosphoserine. Tyr-548 carries the phosphotyrosine modification. The Mg(2+) site is built by Asp-707 and Asp-711. Residues 763-782 traverse the membrane as a helical segment; sequence KKSIAYTLTSNIPEITPFLL. At 783–792 the chain is on the extracellular side; the sequence is FIMANIPLPL. Residues 793-813 form a helical membrane-spanning segment; sequence GTITILCIDLGTDMVPAISLA. Over 814 to 833 the chain is Cytoplasmic; it reads YEAAESDIMKRQPRNPRTDK. The helical transmembrane segment at 834–856 threads the bilayer; it reads LVNERLISMAYGQIGMIQALGGF. Topologically, residues 857-908 are extracellular; that stretch reads FSYFVILAENGFLPGNLVGIRLNWDDRTVNDLEDSYGQQWTYEQRKVVEFTC. Residues 909-928 traverse the membrane as a helical segment; the sequence is HTAFFVSIVVVQWADLIICK. Over 929 to 941 the chain is Cytoplasmic; it reads TRRNSVFQQGMKN. Ser-933 is modified (phosphoserine; by PKA). A helical transmembrane segment spans residues 942–960; it reads KILIFGLFEETALAAFLSY. The Extracellular segment spans residues 961-975; the sequence is CPGMDVALRMYPLKP. Residues 976–996 traverse the membrane as a helical segment; sequence SWWFCAFPYSFLIFVYDEIRK. The Cytoplasmic portion of the chain corresponds to 997-1013; sequence LILRRNPGGWVEKETYY.

Belongs to the cation transport ATPase (P-type) (TC 3.A.3) family. Type IIC subfamily. As to quaternary structure, the sodium/potassium-transporting ATPase is composed of a catalytic alpha subunit, an auxiliary non-catalytic beta subunit and an additional regulatory subunit. Interacts with regulatory subunit FXYD1.

The protein resides in the cell membrane. It carries out the reaction K(+)(out) + Na(+)(in) + ATP + H2O = K(+)(in) + Na(+)(out) + ADP + phosphate + H(+). Its function is as follows. This is the catalytic component of the active enzyme, which catalyzes the hydrolysis of ATP coupled with the exchange of sodium and potassium ions across the plasma membrane. This action creates the electrochemical gradient of sodium and potassium ions, providing the energy for active transport of various nutrients. This Homo sapiens (Human) protein is Sodium/potassium-transporting ATPase subunit alpha-3 (ATP1A3).